Here is a 658-residue protein sequence, read N- to C-terminus: Scarecrow-like protein 28 (658 aa).

Disordered regions lie at residues 43–85, 96–115, and 209–265; these read PCSS…TSGC, LATT…NNNR, and PAAV…NNNR. Positions 214–228 are enriched in low complexity; that stretch reads EASGGSSTSASSESR. The GRAS domain occupies 265–654; the sequence is RNDLQRDFEL…QPLYTISAWT (390 aa). The leucine repeat I (LRI) stretch occupies residues 272–336; sequence FELVNLLTGC…VARMWPHIFH (65 aa). Residues 355-420 form a VHIID region; the sequence is LRFLNQVTPI…NPPHHVRITG (66 aa). Positions 386–390 match the VHIID motif; sequence VHIID. Positions 430–462 are leucine repeat II (LRII); the sequence is ETGDRLHGFAEAMNLQFEFHPVVDRLEDVRLWM. The PFYRE stretch occupies residues 471-563; that stretch reads VAVNCVMQMH…EMLFGREIRN (93 aa). Residues 566–654 are SAW; it reads ACEGSHRQER…QPLYTISAWT (89 aa).

It belongs to the GRAS family. As to quaternary structure, interacts with SNRNP35 and CYP95. In terms of tissue distribution, expressed in roots and sepals.

It localises to the nucleus. Probable transcription factor involved in plant development. The polypeptide is Scarecrow-like protein 28 (SCL28) (Arabidopsis thaliana (Mouse-ear cress)).